The chain runs to 227 residues: 7-cyano-7-deazaguanine synthase (227 aa).

8–18 lines the ATP pocket; the sequence is FSGGQDSTTCL. Residues C187, C196, C199, and C202 each coordinate Zn(2+).

Belongs to the QueC family. Zn(2+) serves as cofactor.

It catalyses the reaction 7-carboxy-7-deazaguanine + NH4(+) + ATP = 7-cyano-7-deazaguanine + ADP + phosphate + H2O + H(+). The protein operates within purine metabolism; 7-cyano-7-deazaguanine biosynthesis. Its function is as follows. Catalyzes the ATP-dependent conversion of 7-carboxy-7-deazaguanine (CDG) to 7-cyano-7-deazaguanine (preQ(0)). The protein is 7-cyano-7-deazaguanine synthase of Aliivibrio fischeri (strain ATCC 700601 / ES114) (Vibrio fischeri).